A 394-amino-acid chain; its full sequence is Cobalt-precorrin-5B C(1)-methyltransferase (394 aa).

This sequence belongs to the CbiD family.

It carries out the reaction Co-precorrin-5B + S-adenosyl-L-methionine = Co-precorrin-6A + S-adenosyl-L-homocysteine. Its pathway is cofactor biosynthesis; adenosylcobalamin biosynthesis; cob(II)yrinate a,c-diamide from sirohydrochlorin (anaerobic route): step 6/10. In terms of biological role, catalyzes the methylation of C-1 in cobalt-precorrin-5B to form cobalt-precorrin-6A. This is Cobalt-precorrin-5B C(1)-methyltransferase from Clostridium beijerinckii (strain ATCC 51743 / NCIMB 8052) (Clostridium acetobutylicum).